A 55-amino-acid chain; its full sequence is Photosystem II reaction center protein K (55 aa).

Positions 1–18 (MFYIHLENTFDLSSTILV) are excised as a propeptide. The chain crosses the membrane as a helical span at residues 26–46 (IFDPIVDVMPIIPLFFFLLAF).

Belongs to the PsbK family. PSII is composed of 1 copy each of membrane proteins PsbA, PsbB, PsbC, PsbD, PsbE, PsbF, PsbH, PsbI, PsbJ, PsbK, PsbL, PsbM, PsbT, PsbX, PsbY, PsbZ, Psb30/Ycf12, at least 3 peripheral proteins of the oxygen-evolving complex and a large number of cofactors. It forms dimeric complexes.

The protein resides in the plastid. It is found in the chloroplast thylakoid membrane. Its function is as follows. One of the components of the core complex of photosystem II (PSII). PSII is a light-driven water:plastoquinone oxidoreductase that uses light energy to abstract electrons from H(2)O, generating O(2) and a proton gradient subsequently used for ATP formation. It consists of a core antenna complex that captures photons, and an electron transfer chain that converts photonic excitation into a charge separation. In Anthoceros angustus (Hornwort), this protein is Photosystem II reaction center protein K.